A 156-amino-acid polypeptide reads, in one-letter code: Small ribosomal subunit protein uS7 (156 aa).

It belongs to the universal ribosomal protein uS7 family. Part of the 30S ribosomal subunit. Contacts proteins S9 and S11.

Functionally, one of the primary rRNA binding proteins, it binds directly to 16S rRNA where it nucleates assembly of the head domain of the 30S subunit. Is located at the subunit interface close to the decoding center, probably blocks exit of the E-site tRNA. This chain is Small ribosomal subunit protein uS7, found in Bacillus licheniformis (strain ATCC 14580 / DSM 13 / JCM 2505 / CCUG 7422 / NBRC 12200 / NCIMB 9375 / NCTC 10341 / NRRL NRS-1264 / Gibson 46).